Consider the following 553-residue polypeptide: MRSDNTKKGDARAPNRSLLKAIGVTDSEMKKPFIAVVNSWTEFIPGHIHLDKVAEAVKAGIRNAGGVPFEFHTIGVCDGIAMGHEGMKYSLPSREAIEDTIEIMIQGQQMDGMVMVTSCDKITPGHLMAAGRVDIPAIVVTGGPMLPGFVDDKYTDLVSVFEGVGSCQSGAVSSEKLKQLEDLCCCGAGSCAGMFTANTMACMTEALGLSLPGCATAHAVDAKKMRMAKESGERIVEMVSEGLTARKIVTDKSFENAIRVDLAVGGSTNTTLHLPAIAHEFGLELPLEKFNELSKTTPHLIGLRPGGENFMIDFERAGGVQAIMKRLVTKLNLDEKTITGKTVGENIDEFVIVNPKTNARVITTIEEPLHEEGGIAVLKGNLAPDGSVVKQSAVHEKMLRHTGPARVFDSEEEAMETILKGDIKSGDVVVIRYEGPKGGPGMREMLSPTSAIAGMGLIDSVALITDGRFSGGTRGPCIGHISPEAYEGGPIGLIQEGDIIEIDMPERRLELKVSEEDLEKRRVLFKPVEKEATGYLSRYRKIVSSASKGAIRE.

D78 is a binding site for Mg(2+). [2Fe-2S] cluster is bound at residue C119. Mg(2+) contacts are provided by D120 and K121. At K121 the chain carries N6-carboxylysine. Residue C191 participates in [2Fe-2S] cluster binding. E444 lines the Mg(2+) pocket. Residue S470 is the Proton acceptor of the active site.

Belongs to the IlvD/Edd family. As to quaternary structure, homodimer. [2Fe-2S] cluster serves as cofactor. Requires Mg(2+) as cofactor.

The enzyme catalyses (2R)-2,3-dihydroxy-3-methylbutanoate = 3-methyl-2-oxobutanoate + H2O. It catalyses the reaction (2R,3R)-2,3-dihydroxy-3-methylpentanoate = (S)-3-methyl-2-oxopentanoate + H2O. It participates in amino-acid biosynthesis; L-isoleucine biosynthesis; L-isoleucine from 2-oxobutanoate: step 3/4. The protein operates within amino-acid biosynthesis; L-valine biosynthesis; L-valine from pyruvate: step 3/4. Functionally, functions in the biosynthesis of branched-chain amino acids. Catalyzes the dehydration of (2R,3R)-2,3-dihydroxy-3-methylpentanoate (2,3-dihydroxy-3-methylvalerate) into 2-oxo-3-methylpentanoate (2-oxo-3-methylvalerate) and of (2R)-2,3-dihydroxy-3-methylbutanoate (2,3-dihydroxyisovalerate) into 2-oxo-3-methylbutanoate (2-oxoisovalerate), the penultimate precursor to L-isoleucine and L-valine, respectively. The chain is Dihydroxy-acid dehydratase from Methanococcoides burtonii (strain DSM 6242 / NBRC 107633 / OCM 468 / ACE-M).